The following is a 444-amino-acid chain: MSTDKTQVKLRFFTREEDETLHVNDAPIYAPVSLKRYGLSEIVNHLLELPKSMPFDFLIDGELLRTSLQDYLIKKGLSSETFLNVEYTRAVLPPSYLSSFDNEDWVSSLDVGSNYIYSGSYDGIVRTYNLSGKVEKQYSGHSGPIRAVHYISSTRLVSAGNDRTLRLWKTKNDDLKSIDEEEIEDGKTLAILEGHKAPVVSIDVSKDRILSASCDNTVSLWSTNYKEMTVIDPMEDLGGNVSTAAKKRRKLTLKDGSIRRRAPLALFESHSAPVEAVIFDKSDDTVGYSVSQDHTIKTWDLITAKCVDTKTTSYSLLSVAQLPKLNLLACGSSARHITLHDPRVNSSSKITQQQLVGHKNFVVALDTCPENEYMICSASHDGTVKVWDVRSNTAMYTITREDKNVVKGVNDKVFAVKWAKGVGIISGGQDKKIQINKGDNIFSN.

The ubiquitin-like (UBL) domain stretch occupies residues 8–89 (VKLRFFTREE…ETFLNVEYTR (82 aa)). WD repeat units follow at residues 99-138 (SFDNEDWVSSLDVGSNYIYSGSYDGIVRTYNLSGKVEKQY), 140-178 (GHSGPIRAVHYISSTRLVSAGNDRTLRLWKTKNDDLKSI), 194-231 (GHKAPVVSIDVSKDRILSASCDNTVSLWSTNYKEMTVI), 269-309 (SHSA…CVDT), 311-350 (TTSYSLLSVAQLPKLNLLACGSSARHITLHDPRVNSSSKI), 357-397 (GHKN…AMYT), and 408-444 (GVNDKVFAVKWAKGVGIISGGQDKKIQINKGDNIFSN). The sufficient for interaction with ERB1 and association with 66S pre-ribosomes stretch occupies residues 99–444 (SFDNEDWVSS…INKGDNIFSN (346 aa)).

This sequence belongs to the WD repeat WDR12/YTM1 family. As to quaternary structure, component of the NOP7 complex, composed of ERB1, NOP7 and YTM1. The complex is held together by ERB1, which interacts with NOP7 via its N-terminal domain and with YTM1 via a high-affinity interaction between the seven-bladed beta-propeller domains of the 2 proteins. The NOP7 complex associates with the 66S pre-ribosome. Interacts (via UBL domain) with MDN1 (via VWFA/MIDAS domain).

The protein resides in the nucleus. It is found in the nucleolus. Its subcellular location is the nucleoplasm. Functionally, component of the NOP7 complex, which is required for maturation of the 25S and 5.8S ribosomal RNAs and formation of the 60S ribosome. The protein is Ribosome biogenesis protein YTM1 of Kluyveromyces lactis (strain ATCC 8585 / CBS 2359 / DSM 70799 / NBRC 1267 / NRRL Y-1140 / WM37) (Yeast).